Consider the following 351-residue polypeptide: L-threonine 3-dehydrogenase (351 aa).

Cysteine 39 lines the Zn(2+) pocket. Catalysis depends on charge relay system residues threonine 41 and histidine 44. Zn(2+)-binding residues include histidine 64, glutamate 65, cysteine 94, cysteine 97, cysteine 100, and cysteine 108. Residues isoleucine 176, aspartate 196, arginine 201, 271–273 (LGI), and 295–296 (IY) each bind NAD(+).

This sequence belongs to the zinc-containing alcohol dehydrogenase family. In terms of assembly, homotetramer. The cofactor is Zn(2+).

The protein localises to the cytoplasm. The catalysed reaction is L-threonine + NAD(+) = (2S)-2-amino-3-oxobutanoate + NADH + H(+). It participates in amino-acid degradation; L-threonine degradation via oxydo-reductase pathway; glycine from L-threonine: step 1/2. Functionally, catalyzes the NAD(+)-dependent oxidation of L-threonine to 2-amino-3-ketobutyrate. This is L-threonine 3-dehydrogenase from Francisella tularensis subsp. holarctica (strain OSU18).